The sequence spans 297 residues: Homoserine kinase (297 aa).

82 to 92 (PLTRGLGSSAS) contacts ATP.

It belongs to the GHMP kinase family. Homoserine kinase subfamily.

The protein localises to the cytoplasm. It carries out the reaction L-homoserine + ATP = O-phospho-L-homoserine + ADP + H(+). It participates in amino-acid biosynthesis; L-threonine biosynthesis; L-threonine from L-aspartate: step 4/5. Catalyzes the ATP-dependent phosphorylation of L-homoserine to L-homoserine phosphate. The sequence is that of Homoserine kinase from Bacillus mycoides (strain KBAB4) (Bacillus weihenstephanensis).